The primary structure comprises 275 residues: Anthracycline biosynthesis protein DauV (275 aa).

VOC domains lie at 8 to 136 (APAW…VWRK) and 150 to 263 (SVGW…VVEL).

The protein operates within antibiotic biosynthesis; daunorubicin biosynthesis. It functions in the pathway antibiotic biosynthesis; carminomycin biosynthesis. In terms of biological role, involved in the biosynthesis of the anthracyclines carminomycin and daunorubicin (daunomycin) which are aromatic polyketide antibiotics that exhibit high cytotoxicity and are widely applied in the chemotherapy of a variety of cancers. Acts jointly with DoxA in the conversion of 13-deoxycarminomycin and 13-deoxydaunorubicin to yield carminomycin and daunorubicin, respectively. The chain is Anthracycline biosynthesis protein DauV (dauV) from Streptomyces sp. (strain C5).